The primary structure comprises 275 residues: MPELPEVETVRRGLETLVLGQEIVAVTLKVPKMVKTDLETFALTLPGQIIQSVGRRGKYLLIDLGQLVLVSHLRMEGKYLLFPDEVPDNKHFHVFFELKNGSTLVYQDVRKFGTFDLIAKSQLSAFFAKRKLGPEPKKETFKLKTFEAALLSSQKPIKPHLLDQTLVAGLGNIYVDEVLWAAKVHPETASSRLNKAEIKRLHDETIRILALGIEKGGSTVRTYRNALGADGTMQDYLQVYGQTGKSCPRCGQAIVKLKVGGRGTHICPKCQKKRP.

The active-site Schiff-base intermediate with DNA is Pro2. Glu3 functions as the Proton donor in the catalytic mechanism. Residue Lys58 is the Proton donor; for beta-elimination activity of the active site. The DNA site is built by His91 and Arg110. The FPG-type zinc finger occupies 238–272 (QVYGQTGKSCPRCGQAIVKLKVGGRGTHICPKCQK). The Proton donor; for delta-elimination activity role is filled by Arg262.

This sequence belongs to the FPG family. In terms of assembly, monomer. Zn(2+) serves as cofactor.

It carries out the reaction Hydrolysis of DNA containing ring-opened 7-methylguanine residues, releasing 2,6-diamino-4-hydroxy-5-(N-methyl)formamidopyrimidine.. It catalyses the reaction 2'-deoxyribonucleotide-(2'-deoxyribose 5'-phosphate)-2'-deoxyribonucleotide-DNA = a 3'-end 2'-deoxyribonucleotide-(2,3-dehydro-2,3-deoxyribose 5'-phosphate)-DNA + a 5'-end 5'-phospho-2'-deoxyribonucleoside-DNA + H(+). Functionally, involved in base excision repair of DNA damaged by oxidation or by mutagenic agents. Acts as a DNA glycosylase that recognizes and removes damaged bases. Has a preference for oxidized purines, such as 7,8-dihydro-8-oxoguanine (8-oxoG). Has AP (apurinic/apyrimidinic) lyase activity and introduces nicks in the DNA strand. Cleaves the DNA backbone by beta-delta elimination to generate a single-strand break at the site of the removed base with both 3'- and 5'-phosphates. This chain is Formamidopyrimidine-DNA glycosylase, found in Streptococcus pyogenes serotype M3 (strain ATCC BAA-595 / MGAS315).